The primary structure comprises 600 residues: Probable translation initiation factor IF-2 (600 aa).

Residues 13–228 (LRTPIVAVLG…VLMGLAQRYM (216 aa)) form the tr-type G domain. Residues 22-29 (GHVDHGKT) form a G1 region. 22–29 (GHVDHGKT) is a GTP binding site. The interval 47–51 (AITQH) is G2. Residues 84–87 (DTPG) are G3. Residues 84 to 88 (DTPGH) and 138 to 141 (NKID) each bind GTP. The G4 stretch occupies residues 138 to 141 (NKID). Positions 140–162 (IDTTPGWNPNPDAPVQGTYDDQS) are disordered. The segment at 206–208 (SAE) is G5.

This sequence belongs to the TRAFAC class translation factor GTPase superfamily. Classic translation factor GTPase family. IF-2 subfamily.

Function in general translation initiation by promoting the binding of the formylmethionine-tRNA to ribosomes. Seems to function along with eIF-2. This Halobacterium salinarum (strain ATCC 700922 / JCM 11081 / NRC-1) (Halobacterium halobium) protein is Probable translation initiation factor IF-2.